Consider the following 867-residue polypeptide: Replication origin-binding protein (867 aa).

Positions 1–39 (MNVATCTHQTHHAARAPGATSAPGAASGDPLGARRPIGD) are disordered. The span at 15 to 28 (RAPGATSAPGAASG) shows a compositional bias: low complexity. One can recognise a Helicase ATP-binding domain in the interval 86–251 (ASAPTARCVT…CSLRGEKNVH (166 aa)). 99-106 (APMGSGKT) serves as a coordination point for ATP.

Belongs to the herpesviridae OriBP family. As to quaternary structure, homodimer. Interacts with the major DNA-binding protein ICP8. Interacts with the helicase/primase component UL8 and the polymerase accessory protein UL42.

It is found in the host nucleus. In terms of biological role, functions as a docking protein to recruit essential components of the viral replication machinery to viral DNA origins. In the presence of the major DNA-binding protein, opens dsDNA leading to a conformational change in the origin that facilitates DNA unwinding and subsequent replication. This chain is Replication origin-binding protein, found in Human herpesvirus 2 (strain HG52) (HHV-2).